The sequence spans 156 residues: Gene 55 protein (156 aa).

Residues Lys-132–Glu-156 are disordered.

This Mycobacterium phage L5 (Mycobacteriophage L5) protein is Gene 55 protein (55).